We begin with the raw amino-acid sequence, 601 residues long: Elongation factor 4 (601 aa).

Residues 6 to 188 (NYIRNFSIVA…AIVTQLPSPR (183 aa)) form the tr-type G domain. Residues 18 to 23 (DHGKST) and 135 to 138 (NKVD) contribute to the GTP site.

The protein belongs to the TRAFAC class translation factor GTPase superfamily. Classic translation factor GTPase family. LepA subfamily.

It localises to the cell inner membrane. It catalyses the reaction GTP + H2O = GDP + phosphate + H(+). Functionally, required for accurate and efficient protein synthesis under certain stress conditions. May act as a fidelity factor of the translation reaction, by catalyzing a one-codon backward translocation of tRNAs on improperly translocated ribosomes. Back-translocation proceeds from a post-translocation (POST) complex to a pre-translocation (PRE) complex, thus giving elongation factor G a second chance to translocate the tRNAs correctly. Binds to ribosomes in a GTP-dependent manner. The protein is Elongation factor 4 of Bartonella henselae (strain ATCC 49882 / DSM 28221 / CCUG 30454 / Houston 1) (Rochalimaea henselae).